Reading from the N-terminus, the 322-residue chain is Large ribosomal subunit protein uL10 (322 aa).

Residues 294 to 322 (APAAAAKAEKEEEPAEESDDEMGFGLFDE) form a disordered region. Residues 304–322 (EEEPAEESDDEMGFGLFDE) are compositionally biased toward acidic residues.

It belongs to the universal ribosomal protein uL10 family. In terms of assembly, P0 forms a pentameric complex by interaction with dimers of P1 and P2. Phosphorylated.

Its function is as follows. Ribosomal protein P0 is the functional equivalent of E.coli protein L10. The polypeptide is Large ribosomal subunit protein uL10 (Lupinus luteus (European yellow lupine)).